The following is a 266-amino-acid chain: MYLELQIKKTHIFDLKGNKVEEIELPIFFSYPVRKDLIRRVFISEFTKALQPKGRDPMAGKRTSALSFGINLGLARVPRVKTTGEAALAPNTVGGRLAFPPTVEKKLVEEVNKKEKKLAIISALSATANMNFVKNRGHVFSIDTLPIIVVDDITKLTKTKEIIEVLESLKVYEDVERVKDRIRIRSGKGKMRGRRYKEPKGPLFVIHENNPVFVKAASNIPGVDVILASDLSVIHLAPGGHPGRLTIYTKSSIDVLRKRFEGRLAL.

This sequence belongs to the universal ribosomal protein uL4 family. Part of the 50S ribosomal subunit.

One of the primary rRNA binding proteins, this protein initially binds near the 5'-end of the 23S rRNA. It is important during the early stages of 50S assembly. It makes multiple contacts with different domains of the 23S rRNA in the assembled 50S subunit and ribosome. Its function is as follows. Forms part of the polypeptide exit tunnel. The sequence is that of Large ribosomal subunit protein uL4 from Sulfurisphaera tokodaii (strain DSM 16993 / JCM 10545 / NBRC 100140 / 7) (Sulfolobus tokodaii).